The sequence spans 458 residues: N-acetylgalactosamine kinase (458 aa).

4 residues coordinate alpha-D-galactose: Arg43, Glu49, His50, and Asp52. Residues Gly143, Ser145, and Ser146 each coordinate ATP. Asp190 contributes to the alpha-D-galactose binding site. Catalysis depends on Asp190, which acts as the Proton acceptor. The ATP site is built by Asn233 and Lys234.

It belongs to the GHMP kinase family. GalK subfamily. In terms of assembly, monomer.

It carries out the reaction N-acetyl-alpha-D-galactosamine + ATP = N-acetyl-alpha-D-galactosamine 1-phosphate + ADP + H(+). Its function is as follows. Acts on GalNAc. Also acts as a galactokinase when galactose is present at high concentrations. The protein is N-acetylgalactosamine kinase (Galk2) of Mus musculus (Mouse).